Here is a 422-residue protein sequence, read N- to C-terminus: DNA (cytosine-5)-methyltransferase 3-like (422 aa).

Residues 1–11 (MGSRETPSSCS) show a composition bias toward polar residues. Residues 1–50 (MGSRETPSSCSKTHETLNLETPESSSTDPDSPLEEQWPKSAPDLKEEDSM) are disordered. The span at 20–30 (ETPESSSTDPD) shows a compositional bias: low complexity. The ADD domain maps to 76-208 (EVNVNQRNIE…LKAFHDREGA (133 aa)). The GATA-type; atypical zinc finger occupies 87-117 (ICLCCGSLQVYAQHPLFEGGICAPCKDKFLE). A PHD-type; atypical zinc finger spans residues 128–184 (QSYCTICCSGHTLFICESPDCTRCYCFECVDILVGPGTSERINAMACWVCFLCLPFS).

In terms of assembly, homodimer. Heterotetramer composed of 1 DNMT3A homodimer and 2 DNMT3L subunits (DNMT3L-DNMT3A-DNMT3A-DNMT3L). Interacts with histone H3 (via N-terminus); interaction is strongly inhibited by methylation at lysine 4 (H3K4me). Interacts with EZH2; the interaction is direct. Interacts with SPOCD1.

Its subcellular location is the nucleus. Catalytically inactive regulatory factor of DNA methyltransferases that can either promote or inhibit DNA methylation depending on the context. Essential for the function of DNMT3A and DNMT3B: activates DNMT3A and DNMT3B by binding to their catalytic domain. Acts by accelerating the binding of DNA and S-adenosyl-L-methionine (AdoMet) to the methyltransferases and dissociates from the complex after DNA binding to the methyltransferases. Recognizes unmethylated histone H3 lysine 4 (H3K4me0) and induces de novo DNA methylation by recruitment or activation of DNMT3. Plays a key role in embryonic stem cells and germ cells. In germ cells, required for the methylation of imprinted loci together with DNMT3A. In male germ cells, specifically required to methylate retrotransposons, preventing their mobilization. Plays a key role in embryonic stem cells (ESCs) by acting both as an positive and negative regulator of DNA methylation. While it promotes DNA methylation of housekeeping genes together with DNMT3A and DNMT3B, it also acts as an inhibitor of DNA methylation at the promoter of bivalent genes. Interacts with the EZH2 component of the PRC2/EED-EZH2 complex, preventing interaction of DNMT3A and DNMT3B with the PRC2/EED-EZH2 complex, leading to maintain low methylation levels at the promoters of bivalent genes. Promotes differentiation of ESCs into primordial germ cells by inhibiting DNA methylation at the promoter of RHOX5, thereby activating its expression. The sequence is that of DNA (cytosine-5)-methyltransferase 3-like (Dnmt3l) from Rattus norvegicus (Rat).